Here is a 196-residue protein sequence, read N- to C-terminus: Imidazole glycerol phosphate synthase subunit HisH (196 aa).

The region spanning K2–L196 is the Glutamine amidotransferase type-1 domain. Catalysis depends on C77, which acts as the Nucleophile. Catalysis depends on residues H178 and E180.

As to quaternary structure, heterodimer of HisH and HisF.

It localises to the cytoplasm. The enzyme catalyses 5-[(5-phospho-1-deoxy-D-ribulos-1-ylimino)methylamino]-1-(5-phospho-beta-D-ribosyl)imidazole-4-carboxamide + L-glutamine = D-erythro-1-(imidazol-4-yl)glycerol 3-phosphate + 5-amino-1-(5-phospho-beta-D-ribosyl)imidazole-4-carboxamide + L-glutamate + H(+). It carries out the reaction L-glutamine + H2O = L-glutamate + NH4(+). It functions in the pathway amino-acid biosynthesis; L-histidine biosynthesis; L-histidine from 5-phospho-alpha-D-ribose 1-diphosphate: step 5/9. Its function is as follows. IGPS catalyzes the conversion of PRFAR and glutamine to IGP, AICAR and glutamate. The HisH subunit catalyzes the hydrolysis of glutamine to glutamate and ammonia as part of the synthesis of IGP and AICAR. The resulting ammonia molecule is channeled to the active site of HisF. This Bacteroides thetaiotaomicron (strain ATCC 29148 / DSM 2079 / JCM 5827 / CCUG 10774 / NCTC 10582 / VPI-5482 / E50) protein is Imidazole glycerol phosphate synthase subunit HisH.